Here is a 360-residue protein sequence, read N- to C-terminus: Alpha-2-HS-glycoprotein (360 aa).

Positions 1–15 are cleaved as a signal peptide; the sequence is LVLLLSLAQLWSCHL. Residues 24–130 enclose the Cystatin fetuin-A-type 1 domain; the sequence is YREHNCDDPE…QFTVLSAKCD (107 aa). 6 cysteine pairs are disulfide-bonded: Cys-29–Cys-351, Cys-86–Cys-97, Cys-111–Cys-129, Cys-143–Cys-146, Cys-205–Cys-216, and Cys-227–Cys-244. An N-linked (GlcNAc...) asparagine glycan is attached at Asn-96. A Phosphoserine modification is found at Ser-131. At Thr-132 the chain carries Phosphothreonine. The residue at position 135 (Ser-135) is a Phosphoserine. Positions 141–252 constitute a Cystatin fetuin-A-type 2 domain; sequence KLCPDCPLLT…TCTIFPAQPV (112 aa). An N-linked (GlcNAc...) asparagine glycan is attached at Asn-153. Residues 260–285 are disordered; that stretch reads VAGAAAVEPAPAVDPASPVSPPDGQS. Thr-312 bears the Phosphothreonine mark. Phosphoserine is present on residues Ser-318, Ser-321, and Ser-323.

This sequence belongs to the fetuin family. Post-translationally, phosphorylated by FAM20C in the extracellular medium. In terms of tissue distribution, bone marrow.

Its subcellular location is the secreted. In terms of biological role, a cell adhesion protein that binds immature cells of the granulocyte lineage. The chain is Alpha-2-HS-glycoprotein (AHSG) from Oryctolagus cuniculus (Rabbit).